The sequence spans 236 residues: Small ribosomal subunit protein uS3 (236 aa).

In terms of domain architecture, KH type-2 spans 39-107 (IREILHKELK…DVVINIVEIR (69 aa)). The disordered stretch occupies residues 213 to 236 (MAQDKRMNEGGGESPSPRSRRDAA).

It belongs to the universal ribosomal protein uS3 family. As to quaternary structure, part of the 30S ribosomal subunit. Forms a tight complex with proteins S10 and S14.

Binds the lower part of the 30S subunit head. Binds mRNA in the 70S ribosome, positioning it for translation. The polypeptide is Small ribosomal subunit protein uS3 (Bradyrhizobium sp. (strain ORS 278)).